The following is a 209-amino-acid chain: Molybdenum cofactor guanylyltransferase (209 aa).

Residues 13-15 (LAG), Lys26, Asn54, Asp74, and Asp104 contribute to the GTP site. Asp104 is a binding site for Mg(2+).

The protein belongs to the MobA family. As to quaternary structure, monomer. Requires Mg(2+) as cofactor.

The protein resides in the cytoplasm. The catalysed reaction is Mo-molybdopterin + GTP + H(+) = Mo-molybdopterin guanine dinucleotide + diphosphate. In terms of biological role, transfers a GMP moiety from GTP to Mo-molybdopterin (Mo-MPT) cofactor (Moco or molybdenum cofactor) to form Mo-molybdopterin guanine dinucleotide (Mo-MGD) cofactor. This chain is Molybdenum cofactor guanylyltransferase, found in Acinetobacter baumannii (strain ATCC 17978 / DSM 105126 / CIP 53.77 / LMG 1025 / NCDC KC755 / 5377).